The sequence spans 256 residues: Thiazole synthase (256 aa).

The active-site Schiff-base intermediate with DXP is the lysine 95. Residues glycine 156, 182-183 (AG), and 204-205 (NT) contribute to the 1-deoxy-D-xylulose 5-phosphate site.

Belongs to the ThiG family. As to quaternary structure, homotetramer. Forms heterodimers with either ThiH or ThiS.

Its subcellular location is the cytoplasm. The enzyme catalyses [ThiS sulfur-carrier protein]-C-terminal-Gly-aminoethanethioate + 2-iminoacetate + 1-deoxy-D-xylulose 5-phosphate = [ThiS sulfur-carrier protein]-C-terminal Gly-Gly + 2-[(2R,5Z)-2-carboxy-4-methylthiazol-5(2H)-ylidene]ethyl phosphate + 2 H2O + H(+). It participates in cofactor biosynthesis; thiamine diphosphate biosynthesis. Catalyzes the rearrangement of 1-deoxy-D-xylulose 5-phosphate (DXP) to produce the thiazole phosphate moiety of thiamine. Sulfur is provided by the thiocarboxylate moiety of the carrier protein ThiS. In vitro, sulfur can be provided by H(2)S. The polypeptide is Thiazole synthase (Idiomarina loihiensis (strain ATCC BAA-735 / DSM 15497 / L2-TR)).